Consider the following 493-residue polypeptide: MIFGIIVYLFLIYILHNAYSKYKRLNENQLPGPFPIPILGNIYQLTNLPHFDLTKMSEKYGKIFRIYLADLYTVIVCDPIIARELFVDKFDNFIDRPKIPSVKHGTFYHGTVASMGDNWKNNKEIVGKAMRKTNLKHIYQLLDDQVDVLIESMRTIESSGETFDPRYYLTKFTMSAMFKYIFNEDISKDEDVHNGQLAQLMKPMQKVFKDFGTGSLFDVLEITRPLYFLYLEWFTSHYYQVINFGKMKIYKHLETYKPDVQRDLMDLLIKEYGTETDDQILSISATVSDFFLAGVDTSATSLELIVMMLINYPEYQEKAYNEIKSALSSNGGGGGGGLTQRNKVLLSDRQSTPFVVSLFKETLRYKPISPFGLPRSTTSDIILNNGQFIPKNAQILINYHALSRNEEYFENPNQFDPTRFLNSDSNPAFMPFSIGPRNCVGSNFAQDEIYIALSNMILNFKFKSIDGKPVDETQTYGLTLKPNPFKVILEKRK.

Residues 1 to 21 form a helical membrane-spanning segment; sequence MIFGIIVYLFLIYILHNAYSK. Cysteine 439 is a heme binding site.

Belongs to the cytochrome P450 family. The cofactor is heme.

The protein localises to the membrane. The chain is Probable cytochrome P450 508A2 (cyp508A2-1) from Dictyostelium discoideum (Social amoeba).